We begin with the raw amino-acid sequence, 60 residues long: UPF0434 protein YcaR (60 aa).

This sequence belongs to the UPF0434 family.

The sequence is that of UPF0434 protein YcaR from Salmonella agona (strain SL483).